Here is a 94-residue protein sequence, read N- to C-terminus: Small ribosomal subunit protein uS19 (94 aa).

It belongs to the universal ribosomal protein uS19 family.

Its function is as follows. Protein S19 forms a complex with S13 that binds strongly to the 16S ribosomal RNA. This chain is Small ribosomal subunit protein uS19, found in Carboxydothermus hydrogenoformans (strain ATCC BAA-161 / DSM 6008 / Z-2901).